Here is a 1883-residue protein sequence, read N- to C-terminus: Zinc finger protein 106 (1883 aa).

Residues Ile-6 and Lys-37 each participate in a glycyl lysine isopeptide (Lys-Gly) (interchain with G-Cter in SUMO2) cross-link. The C2H2-type 1; atypical zinc finger occupies 20 to 44; the sequence is HECRVCGVTEVGLSAYAKHISGQLH. Positions 39-162 are disordered; that stretch reads ISGQLHKDNV…NGGGPRGRSG (124 aa). Residues 52-67 are compositionally biased toward acidic residues; it reads EREDDGKGEEEEEDYF. Glycyl lysine isopeptide (Lys-Gly) (interchain with G-Cter in SUMO2) cross-links involve residues Lys-69 and Lys-76. Basic and acidic residues-rich tracts occupy residues 77-86, 96-116, and 128-138; these read QRKEQSRQDE, SDDR…DRES, and PQRDWKWEKDG. Residue Lys-133 forms a Glycyl lysine isopeptide (Lys-Gly) (interchain with G-Cter in SUMO2) linkage. Polar residues predominate over residues 139–148; sequence FNNTRKNSFP. Glycyl lysine isopeptide (Lys-Gly) (interchain with G-Cter in SUMO2) cross-links involve residues Lys-243, Lys-287, and Lys-305. Residues 322–338 are compositionally biased toward polar residues; the sequence is QTTKQADTATSKVSGKN. The interval 322–356 is disordered; sequence QTTKQADTATSKVSGKNGSAAREKPRRWTPYPSQK. Residues Lys-356, Lys-365, Lys-371, and Lys-417 each participate in a glycyl lysine isopeptide (Lys-Gly) (interchain with G-Cter in SUMO2) cross-link. The tract at residues 389–423 is disordered; that stretch reads IQEPQTDETRNSPTQKTQKEIHTGSLNHKASSDSA. Residues 412 to 423 are compositionally biased toward polar residues; sequence GSLNHKASSDSA. Ser-422 is subject to Phosphoserine. Residues Lys-451, Lys-461, Lys-477, Lys-492, Lys-505, Lys-515, Lys-525, Lys-539, and Lys-557 each participate in a glycyl lysine isopeptide (Lys-Gly) (interchain with G-Cter in SUMO2) cross-link. The interval 457–501 is disordered; sequence CPATKSLSQKQDPKNISKNTKTNFFSPGEHSNPSNKPTVEDNHGP. The span at 461–493 shows a compositional bias: polar residues; it reads KSLSQKQDPKNISKNTKTNFFSPGEHSNPSNKP. A disordered region spans residues 586-637; the sequence is LEDESDGETSDTEKHGTKIGTLGSATTELLSGSTRTADEKEEDDRILKTSRE. Ser-590 is modified (phosphoserine). A Glycyl lysine isopeptide (Lys-Gly) (interchain with G-Cter in SUMO2) cross-link involves residue Lys-603. Over residues 608 to 620 the composition is skewed to polar residues; that stretch reads GSATTELLSGSTR. 2 positions are modified to phosphoserine: Ser-641 and Ser-661. Glycyl lysine isopeptide (Lys-Gly) (interchain with G-Cter in SUMO2) cross-links involve residues Lys-671, Lys-684, Lys-705, Lys-721, Lys-741, Lys-775, and Lys-807. Ser-859, Ser-861, Ser-864, and Ser-893 each carry phosphoserine. The segment at 879–945 is disordered; sequence EEGTGKENEP…HSAQLSSDHI (67 aa). Residues 888–906 show a composition bias toward polar residues; the sequence is PQQMVSPSNSLRAGQSQKA. Glycyl lysine isopeptide (Lys-Gly) (interchain with G-Cter in SUMO2) cross-links involve residues Lys-905 and Lys-911. Ser-937 is modified (phosphoserine). Lys-953 participates in a covalent cross-link: Glycyl lysine isopeptide (Lys-Gly) (interchain with G-Cter in SUMO2). Residues 958–976 show a composition bias toward polar residues; it reads QERSIPPSENQNSQESNGE. Disordered regions lie at residues 958 to 982, 997 to 1048, 1121 to 1140, and 1182 to 1218; these read QERS…CLSS, ATDS…KERS, EPSE…RRNS, and PTFQ…VPPS. Position 1021 is a phosphothreonine (Thr-1021). Phosphoserine occurs at positions 1025, 1026, and 1031. Over residues 1035–1045 the composition is skewed to basic residues; that stretch reads KNKRRKIKGKK. Residue Ser-1249 is modified to Phosphoserine. The interval 1252 to 1483 is disordered; sequence ESTESFHEPS…EVSSTSEIGT (232 aa). Residues 1255–1277 are compositionally biased toward basic and acidic residues; that stretch reads ESFHEPSQELKFSVEQRNTRNRE. A Glycyl lysine isopeptide (Lys-Gly) (interchain with G-Cter in SUMO2) cross-link involves residue Lys-1265. 2 stretches are compositionally biased toward polar residues: residues 1278–1291 and 1299–1312; these read NSPS…SSIN and KGNS…SSFL. Phosphoserine is present on residues Ser-1279, Ser-1281, and Ser-1284. Lys-1299 is covalently cross-linked (Glycyl lysine isopeptide (Lys-Gly) (interchain with G-Cter in SUMO2)). Ser-1302 is modified (phosphoserine). Residue Lys-1324 forms a Glycyl lysine isopeptide (Lys-Gly) (interchain with G-Cter in SUMO2) linkage. Residue Ser-1328 is modified to Phosphoserine. Positions 1333 to 1346 are enriched in polar residues; sequence PEQQAESTLTSAET. Residues 1349-1362 are compositionally biased toward basic residues; sequence SKKKKKLRKKKSLR. Ser-1370 is subject to Phosphoserine. The residue at position 1372 (Thr-1372) is a Phosphothreonine. Glycyl lysine isopeptide (Lys-Gly) (interchain with G-Cter in SUMO2) cross-links involve residues Lys-1380, Lys-1392, and Lys-1395. Composition is skewed to basic and acidic residues over residues 1402 to 1416 and 1444 to 1456; these read EDSR…VRDE and GEEK…KKDI. Lys-1454 is covalently cross-linked (Glycyl lysine isopeptide (Lys-Gly) (interchain with G-Cter in SUMO2)). Positions 1457–1481 are enriched in polar residues; the sequence is WNSTEQNPLETSRSGCDEVSSTSEI. Residue Ser-1468 is modified to Phosphoserine. Residues Lys-1486 and Lys-1504 each participate in a glycyl lysine isopeptide (Lys-Gly) (interchain with G-Cter in SUMO2) cross-link. Positions 1502–1513 are enriched in polar residues; sequence SIKGSKNSSEIS. Positions 1502–1527 are disordered; sequence SIKGSKNSSEISSEPGDDDEPTEGSF. WD repeat units lie at residues 1529–1568, 1570–1611, 1654–1695, 1698–1737, 1738–1775, and 1778–1815; these read GHQA…GVFE, HTSK…CVEQ, HGPR…LLRT, GHSK…RIYK, GHNH…RLQV, and GHKD…NYRC. Lys-1585 is covalently cross-linked (Glycyl lysine isopeptide (Lys-Gly) (interchain with G-Cter in SUMO2)). A Glycyl lysine isopeptide (Lys-Gly) (interchain with G-Cter in SUMO2) cross-link involves residue Lys-1737. The segment at 1813 to 1838 adopts a C2H2-type 2; atypical zinc-finger fold; sequence YRCWWHGCSLIFGVVDHLKQHLLTDH. Lys-1864 participates in a covalent cross-link: Glycyl lysine isopeptide (Lys-Gly) (interchain with G-Cter in SUMO2).

As to quaternary structure, interacts with KNOP1. Interacts with TARDBP and NUP107. Interacts (via N-terminus) with RBM39. Interacts with the SH3 domains of FYN and GRB2. In terms of processing, phosphorylated by FYN in vitro.

Its subcellular location is the nucleus. The protein localises to the nucleolus. It localises to the nucleus speckle. In terms of biological role, RNA-binding protein. Specifically binds to 5'-GGGGCC-3' sequence repeats in RNA. Essential for maintenance of peripheral motor neuron and skeletal muscle function. Required for normal expression and/or alternative splicing of a number of genes in spinal cord and skeletal muscle, including the neurite outgrowth inhibitor RTN4. Also contributes to normal mitochondrial respiratory function in motor neurons, via an unknown mechanism. This is Zinc finger protein 106 (ZNF106) from Homo sapiens (Human).